A 643-amino-acid chain; its full sequence is Ecto-NOX disulfide-thiol exchanger 1 (643 aa).

In terms of domain architecture, RRM spans Lys142–Ala221. Coiled-coil stretches lie at residues Val307–Ile342 and Gln425–Gly521.

Belongs to the ENOX family. Cu cation serves as cofactor.

Its subcellular location is the cell membrane. It localises to the secreted. The protein localises to the extracellular space. Not inhibited by the antitumor sulfonylurea LY181984, the vabilloid capsaicin, and retinoids. In terms of biological role, probably acts as a terminal oxidase of plasma electron transport from cytosolic NAD(P)H via hydroquinones to acceptors at the cell surface. Hydroquinone oxidase activity alternates with a protein disulfide-thiol interchange/oxidoreductase activity which may control physical membrane displacements associated with vesicle budding or cell enlargement. The activities oscillate with a period length of 24 minutes and play a role in control of the ultradian cellular biological clock. This chain is Ecto-NOX disulfide-thiol exchanger 1 (Enox1), found in Mus musculus (Mouse).